Consider the following 117-residue polypeptide: Large ribosomal subunit protein bL20 (117 aa).

Belongs to the bacterial ribosomal protein bL20 family.

In terms of biological role, binds directly to 23S ribosomal RNA and is necessary for the in vitro assembly process of the 50S ribosomal subunit. It is not involved in the protein synthesizing functions of that subunit. This chain is Large ribosomal subunit protein bL20, found in Rickettsia canadensis (strain McKiel).